We begin with the raw amino-acid sequence, 258 residues long: Regulatory protein RecX (258 aa).

This sequence belongs to the RecX family.

The protein resides in the cytoplasm. Functionally, modulates RecA activity. The sequence is that of Regulatory protein RecX from Streptococcus pyogenes serotype M5 (strain Manfredo).